The chain runs to 432 residues: Enolase (432 aa).

Residue glutamine 164 participates in (2R)-2-phosphoglycerate binding. The Proton donor role is filled by glutamate 206. Mg(2+) is bound by residues aspartate 243, glutamate 284, and aspartate 311. (2R)-2-phosphoglycerate contacts are provided by lysine 336, arginine 365, serine 366, and lysine 387. The Proton acceptor role is filled by lysine 336.

Belongs to the enolase family. The cofactor is Mg(2+).

The protein resides in the cytoplasm. It localises to the secreted. Its subcellular location is the cell surface. The catalysed reaction is (2R)-2-phosphoglycerate = phosphoenolpyruvate + H2O. It participates in carbohydrate degradation; glycolysis; pyruvate from D-glyceraldehyde 3-phosphate: step 4/5. Catalyzes the reversible conversion of 2-phosphoglycerate (2-PG) into phosphoenolpyruvate (PEP). It is essential for the degradation of carbohydrates via glycolysis. This chain is Enolase, found in Synechococcus sp. (strain JA-3-3Ab) (Cyanobacteria bacterium Yellowstone A-Prime).